The primary structure comprises 458 residues: MKSNFSKFKDFIKYKKVAVVGIGVSNRPLIKFLVKLGAKVTAFDKKHREKLGSISLELEEIGVDLVLGENYLDKLDGYDVIFKTPSMRIDRPEFVKAKEAGAYITSEMEEFIKYCPAKVFGITGSDGKTTTTTLVYEMLKKEDYRTWVGGNIGTPLFANIEEMKEDHMVVLELSSFQLMTMDVSPEISLITNLSPNHLDVHKDFEEYVWAKKNIFKYQSSNNLLVLNKDDDLTNEMENEALGDVLKFSLVEKVYNGACLSNNKLTIQGKEVCDSKDIKLKGRHNIANLLAAFCMINKYVSIDSMKYVATNFSGVEHRCEFIREVNGVKYYNDSIASSPSRTLAGLNSFEKPVILIAGGYDKKIPFEPLAEGGYDKIKILILMGDTKNKIKSAFEKVISYKKCEMEIVIVNSMEEAVKVADNMAEKGDIITLSPACASFDMYPNFEIRGNEFKNIVNRL.

124–130 is an ATP binding site; the sequence is GSDGKTT.

The protein belongs to the MurCDEF family.

The protein resides in the cytoplasm. The enzyme catalyses UDP-N-acetyl-alpha-D-muramoyl-L-alanine + D-glutamate + ATP = UDP-N-acetyl-alpha-D-muramoyl-L-alanyl-D-glutamate + ADP + phosphate + H(+). It functions in the pathway cell wall biogenesis; peptidoglycan biosynthesis. In terms of biological role, cell wall formation. Catalyzes the addition of glutamate to the nucleotide precursor UDP-N-acetylmuramoyl-L-alanine (UMA). This Clostridium botulinum (strain Kyoto / Type A2) protein is UDP-N-acetylmuramoylalanine--D-glutamate ligase.